We begin with the raw amino-acid sequence, 828 residues long: Glycerol-3-phosphate acyltransferase (828 aa).

An HXXXXD motif motif is present at residues 309 to 314 (CHRSHI).

This sequence belongs to the GPAT/DAPAT family.

The protein resides in the cell inner membrane. It carries out the reaction sn-glycerol 3-phosphate + an acyl-CoA = a 1-acyl-sn-glycero-3-phosphate + CoA. Its pathway is phospholipid metabolism; CDP-diacylglycerol biosynthesis; CDP-diacylglycerol from sn-glycerol 3-phosphate: step 1/3. This Pseudomonas putida (strain GB-1) protein is Glycerol-3-phosphate acyltransferase.